Here is a 343-residue protein sequence, read N- to C-terminus: MTTDTTGRTGNPAAAASPERFRYGFLKGNPQLTKNGELKHLLSIEGLPRSIVNHILDTAEQFVSVTDREVKKVPLLRGKSVFNLFFENSTRTRTTFEIAATRLSADVLNLNINASSTSKGESLLDTINNLSAMHADLFVVRHASSGAPYLIAEHCAPHVHVINAGDGRHAHPTQGLLDMYTIRHYKRDFTKLRVAIVGDILHSRVARSDIHALTTLGVPEVRAIGPRTLLPGGLEQMGVKVFNNLDEGLKGVDVIIMLRLQNERMSGALLPSAQEYFKTWGLTPERLALAAPDAIVMHPGPMNRGVEIDSQVADGPQSVILNQVTFGIAVRMAVMGIVAGNSD.

Carbamoyl phosphate is bound by residues R91 and T92. K119 is a binding site for L-aspartate. Carbamoyl phosphate-binding residues include R141, H171, and Q174. Positions 204 and 259 each coordinate L-aspartate. G300 and P301 together coordinate carbamoyl phosphate.

It belongs to the aspartate/ornithine carbamoyltransferase superfamily. ATCase family. Heterododecamer (2C3:3R2) of six catalytic PyrB chains organized as two trimers (C3), and six regulatory PyrI chains organized as three dimers (R2).

It carries out the reaction carbamoyl phosphate + L-aspartate = N-carbamoyl-L-aspartate + phosphate + H(+). The protein operates within pyrimidine metabolism; UMP biosynthesis via de novo pathway; (S)-dihydroorotate from bicarbonate: step 2/3. In terms of biological role, catalyzes the condensation of carbamoyl phosphate and aspartate to form carbamoyl aspartate and inorganic phosphate, the committed step in the de novo pyrimidine nucleotide biosynthesis pathway. In Burkholderia ambifaria (strain MC40-6), this protein is Aspartate carbamoyltransferase catalytic subunit.